Consider the following 805-residue polypeptide: Leucine--tRNA ligase (805 aa).

The short motif at 40 to 51 is the 'HIGH' region element; the sequence is PYPSGSGLHVGH. The short motif at 576–580 is the 'KMSKS' region element; sequence KMSKS. Residue lysine 579 coordinates ATP.

It belongs to the class-I aminoacyl-tRNA synthetase family.

It is found in the cytoplasm. It carries out the reaction tRNA(Leu) + L-leucine + ATP = L-leucyl-tRNA(Leu) + AMP + diphosphate. The polypeptide is Leucine--tRNA ligase (Chlorobium luteolum (strain DSM 273 / BCRC 81028 / 2530) (Pelodictyon luteolum)).